The sequence spans 1746 residues: Non-reducing polyketide synthase ptaA (1746 aa).

The segment at 4–227 (NSGSGTSPWG…ALPVYGGLCH (224 aa)) is N-terminal acylcarrier protein transacylase domain (SAT). The region spanning 361–796 (QSKIAIVGMS…GGNTTIAIEE (436 aa)) is the Ketosynthase family 3 (KS3) domain. Active-site for beta-ketoacyl synthase activity residues include cysteine 534, histidine 670, and histidine 714. Residues 898–1218 (FAFTGQGASY…LGALHLAGIP (321 aa)) are malonyl-CoA:ACP transacylase (MAT) domain. The tract at residues 1286–1605 (TSTVHRVIGE…RLLLDRFFSA (320 aa)) is product template (PT) domain. An N-terminal hotdog fold region spans residues 1290–1425 (HRVIGETFDG…ATLFYGKAND (136 aa)). One can recognise a PKS/mFAS DH domain in the interval 1290-1600 (HRVIGETFDG…FRRYPRLLLD (311 aa)). Histidine 1322 acts as the Proton acceptor; for dehydratase activity in catalysis. The interval 1452–1600 (VANRFSRNMA…FRRYPRLLLD (149 aa)) is C-terminal hotdog fold. Residue aspartate 1511 is the Proton donor; for dehydratase activity of the active site. The region spanning 1671–1745 (DSITVKAMAL…DLRAWLLEYY (75 aa)) is the Carrier domain. Position 1705 is an O-(pantetheine 4'-phosphoryl)serine (serine 1705).

It catalyses the reaction holo-[ACP] + 8 malonyl-CoA + 8 H(+) = atrochrysone carboxyl-[ACP] + 8 CO2 + 8 CoA + 2 H2O. It participates in secondary metabolite biosynthesis. Functionally, non-reducing polyketide synthase; part of the gene cluster that mediates the biosynthesis of pestheic acid, a diphenyl ether which is a biosynthetic precursor of the unique chloropupukeananes. The biosynthesis initiates from condensation of acetate and malonate units catalyzed by the non-reducing PKS ptaA. As the ptaA protein is TE/CLC domain-deficient, hydrolysis and Claisen cyclization of the polyketide could be catalyzed by ptaB containing a beta-lactamase domain. The ptaB protein might hydrolyze the thioester bond between the ACP of ptaA and the intermediate to release atrochrysone carboxylic acid, which is spontaneously dehydrated to form endocrocin anthrone. Endocrocin anthrone is then converted to endocrocin, catalyzed by the anthrone oxygenase ptaC. Spontaneous decarboxylation of endocrocin occurs to generate emodin. An O-methyltransferase (ptaH or ptaI) could methylate emodin to form physcion. PtaJ could then catalyze the oxidative cleavage of physcion, and rotation of the intermediate could then afford desmethylisosulochrin. PtaF, a putative NADH-dependent oxidoreductase, might also participate in the oxidative cleavage step. Desmethylisosulochrin is then transformed by another O-methyltransferase (ptaH or ptaI) to form isosulochrin. Chlorination of isosulochrin by ptaM in the cyclohexadienone B ring then produces chloroisosulochrin. PtaE is responsible for the oxidative coupling reactions of both benzophenones isosulochrin and chloroisosulochrin to RES-1214-1 and pestheic acid respectively, regardless of chlorination. This Pestalotiopsis fici (strain W106-1 / CGMCC3.15140) protein is Non-reducing polyketide synthase ptaA.